The sequence spans 485 residues: Velvet complex subunit B (485 aa).

One can recognise a Velvet domain in the interval 33–459; that stretch reads GRKHYSLEVV…GNQGQKLPLA (427 aa). The disordered stretch occupies residues 107–353; that stretch reads VLHPSSVDRH…PPPPRHTYTR (247 aa). Polar residues-rich tracts occupy residues 134–155, 234–243, 267–304, and 326–341; these read APQS…TLSQ, RSPSSSTSDH, SISS…SPHS, and THSQ…QHVS.

It belongs to the velvet family. VelB subfamily. Component of the heterotrimeric velvet complex composed of laeA, veA and velB; VeA acting as a bridging protein between laeA and velB. Forms a heterodimeric complex with vosA; the formation of the velB-vosA complex is light-dependent.

The protein resides in the nucleus. It localises to the cytoplasm. Functionally, component of the velvet transcription factor complex that controls sexual/asexual developmental ratio in response to light, promoting sexual development in the darkness while stimulating asexual sporulation under illumination. The velvet complex acts as a global regulator for secondary metabolite gene expression. Component of the velB-VosA heterodimeric complex that plays a dual role in activating genes associated with spore maturation and repressing certain development-associated genes. The velB-VosA complex binds DNA through the DNA-binding domain of vosA that recognizes an 11-nucleotide consensus sequence 5'-CTGGCCGCGGC-3' consisting of two motifs in the promoters of key developmental regulatory genes. This is Velvet complex subunit B from Laccaria bicolor (strain S238N-H82 / ATCC MYA-4686) (Bicoloured deceiver).